A 137-amino-acid chain; its full sequence is UPF0146 protein MJ0688 (137 aa).

This sequence belongs to the UPF0146 family.

In Methanocaldococcus jannaschii (strain ATCC 43067 / DSM 2661 / JAL-1 / JCM 10045 / NBRC 100440) (Methanococcus jannaschii), this protein is UPF0146 protein MJ0688.